Consider the following 293-residue polypeptide: MDSDWESTFEFVSETGQIKKRGSKTSELKQNETTDAVVVNNEKVKKRRNSKDSHIVLAKEIFAVAFFSLGMSCLLMADVSTFLWGINNPNSQQSKSIGSNIDQMSSEEFQQKVHDYMSEIQRTGRDKRPSRRFVDSARFYILSEIEPIELALRREWIPDHSFFEGVQEFIRGMEWENTFEEELFVRGVPNFDHDFESEEMTLKTTLDGKNYNNQFLNLGRKEIIGKHHSMEYFISGRTLIRLVKNEGQELSRTEYYLKHGDLHVYDKRGNLDCTRVYRSPTISPMLQSKIRQF.

A helical membrane pass occupies residues 55–77; it reads IVLAKEIFAVAFFSLGMSCLLMA.

Its subcellular location is the membrane. This is an uncharacterized protein from Caenorhabditis elegans.